The following is a 496-amino-acid chain: Amino-acid acetyltransferase, mitochondrial (496 aa).

The N-acetyltransferase domain maps to 333 to 493 (YHGTDCLTNG…LDVIDSIQPT (161 aa)).

Belongs to the acetyltransferase family.

The protein resides in the mitochondrion. The enzyme catalyses L-glutamate + acetyl-CoA = N-acetyl-L-glutamate + CoA + H(+). It participates in amino-acid biosynthesis; L-arginine biosynthesis; N(2)-acetyl-L-ornithine from L-glutamate: step 1/4. Functionally, N-acetylglutamate synthase involved in arginine biosynthesis. This Schizosaccharomyces japonicus (strain yFS275 / FY16936) (Fission yeast) protein is Amino-acid acetyltransferase, mitochondrial (arg2).